The primary structure comprises 487 residues: Iron-sulfur cluster assembly SufBD family protein ycf24 (487 aa).

It belongs to the iron-sulfur cluster assembly SufBD family.

The protein localises to the plastid. Its subcellular location is the chloroplast. This Porphyra purpurea (Red seaweed) protein is Iron-sulfur cluster assembly SufBD family protein ycf24 (ycf24).